The sequence spans 292 residues: Putative rRNA 2'-O-methyltransferase fibrillarin 3 (292 aa).

Residues 1-58 are disordered; it reads MKPPQRGRGGGVRGGRGLARGGEGSAVRGSGRGGESGRGRGPGRVKSESDGGIKGGSK. The segment covering 7–42 has biased composition (gly residues); that stretch reads GRGGGVRGGRGLARGGEGSAVRGSGRGGESGRGRGP. S-adenosyl-L-methionine is bound by residues 146 to 147, 165 to 166, 190 to 191, and 210 to 213; these read YT, EH, DA, and DVNH.

It belongs to the methyltransferase superfamily. Fibrillarin family. In terms of assembly, component of box C/D small nucleolar ribonucleoprotein (snoRNP) particles. Not detectable by RT-PCR.

It localises to the nucleus. Its subcellular location is the nucleolus. It catalyses the reaction L-glutaminyl-[histone H2A] + S-adenosyl-L-methionine = N(5)-methyl-L-glutaminyl-[histone H2A] + S-adenosyl-L-homocysteine + H(+). Functionally, S-adenosyl-L-methionine-dependent methyltransferase that has the ability to methylate both RNAs and proteins. Involved in pre-rRNA processing. Utilizes the methyl donor S-adenosyl-L-methionine to catalyze the site-specific 2'-hydroxyl methylation of ribose moieties in pre-ribosomal RNA. Site specificity is provided by a guide RNA that base pairs with the substrate. Methylation occurs at a characteristic distance from the sequence involved in base pairing with the guide RNA. Also acts as a protein methyltransferase by mediating methylation of 'Gln-105' of histone H2A (H2AQ105me), a modification that impairs binding of the FACT complex and is specifically present at 35S ribosomal DNA locus. The protein is Putative rRNA 2'-O-methyltransferase fibrillarin 3 (FIB3) of Arabidopsis thaliana (Mouse-ear cress).